We begin with the raw amino-acid sequence, 828 residues long: Periplasmic nitrate reductase (828 aa).

Residues 1–31 constitute a signal peptide (tat-type signal); it reads MKLSRRGFMKANAVAAAAAAAGLSVPGVARA. The 57-residue stretch at 39–95 folds into the 4Fe-4S Mo/W bis-MGD-type domain; sequence IKWDKAPCRFCGTGCGVLVGTQQGRVVACQGDPDAPVNRGLNCIKGYFLPKIMYGED. Residues Cys-46, Cys-49, Cys-53, and Cys-81 each coordinate [4Fe-4S] cluster. Mo-bis(molybdopterin guanine dinucleotide) contacts are provided by residues Lys-83, Gln-150, Asn-175, Cys-179, 212 to 219, 243 to 247, 262 to 264, Met-372, Gln-376, Asn-482, 508 to 509, Lys-531, Asp-558, and 718 to 727; these read WGANMAEM, STYQH, QSD, SD, and TGRVLEHWHT. Phe-794 lines the substrate pocket. Asn-802 and Lys-819 together coordinate Mo-bis(molybdopterin guanine dinucleotide).

The protein belongs to the prokaryotic molybdopterin-containing oxidoreductase family. NasA/NapA/NarB subfamily. As to quaternary structure, component of the periplasmic nitrate reductase NapAB complex composed of NapA and NapB. Requires [4Fe-4S] cluster as cofactor. Mo-bis(molybdopterin guanine dinucleotide) serves as cofactor. Predicted to be exported by the Tat system. The position of the signal peptide cleavage has not been experimentally proven.

It localises to the periplasm. It carries out the reaction 2 Fe(II)-[cytochrome] + nitrate + 2 H(+) = 2 Fe(III)-[cytochrome] + nitrite + H2O. Its function is as follows. Catalytic subunit of the periplasmic nitrate reductase complex NapAB. Receives electrons from NapB and catalyzes the reduction of nitrate to nitrite. The chain is Periplasmic nitrate reductase from Shigella dysenteriae serotype 1 (strain Sd197).